A 177-amino-acid chain; its full sequence is Inorganic pyrophosphatase (177 aa).

Lys30, Arg44, and Tyr56 together coordinate substrate. Positions 66, 71, and 103 each coordinate Mg(2+). Tyr142 serves as a coordination point for substrate.

Belongs to the PPase family. Homohexamer. It depends on Mg(2+) as a cofactor.

The protein resides in the cytoplasm. The enzyme catalyses diphosphate + H2O = 2 phosphate + H(+). In terms of biological role, catalyzes the hydrolysis of inorganic pyrophosphate (PPi) forming two phosphate ions. The protein is Inorganic pyrophosphatase of Agrobacterium fabrum (strain C58 / ATCC 33970) (Agrobacterium tumefaciens (strain C58)).